Consider the following 540-residue polypeptide: 2,3-bisphosphoglycerate-independent phosphoglycerate mutase (540 aa).

Mn(2+) is bound by residues Asp25 and Ser75. The active-site Phosphoserine intermediate is Ser75. Residues His136, 166-167, Arg198, Arg204, 269-272, and Lys342 contribute to the substrate site; these read RD and RPDR. Mn(2+) is bound by residues Asp409, His413, Asp450, His451, and His468.

This sequence belongs to the BPG-independent phosphoglycerate mutase family. In terms of assembly, monomer. Requires Mn(2+) as cofactor.

The enzyme catalyses (2R)-2-phosphoglycerate = (2R)-3-phosphoglycerate. It participates in carbohydrate degradation; glycolysis; pyruvate from D-glyceraldehyde 3-phosphate: step 3/5. Its function is as follows. Catalyzes the interconversion of 2-phosphoglycerate and 3-phosphoglycerate. The chain is 2,3-bisphosphoglycerate-independent phosphoglycerate mutase from Prochlorococcus marinus subsp. pastoris (strain CCMP1986 / NIES-2087 / MED4).